The sequence spans 134 residues: ATP synthase epsilon chain (134 aa).

It belongs to the ATPase epsilon chain family. In terms of assembly, F-type ATPases have 2 components, CF(1) - the catalytic core - and CF(0) - the membrane proton channel. CF(1) has five subunits: alpha(3), beta(3), gamma(1), delta(1), epsilon(1). CF(0) has three main subunits: a, b and c.

Its subcellular location is the cell membrane. In terms of biological role, produces ATP from ADP in the presence of a proton gradient across the membrane. The protein is ATP synthase epsilon chain of Listeria welshimeri serovar 6b (strain ATCC 35897 / DSM 20650 / CCUG 15529 / CIP 8149 / NCTC 11857 / SLCC 5334 / V8).